We begin with the raw amino-acid sequence, 426 residues long: Serine--tRNA ligase (426 aa).

Residues 44–67 (TEKQALQSERNATSKQIGMLKKKG) form a disordered region. Positions 47 to 59 (QALQSERNATSKQ) are enriched in polar residues. Residue 231 to 233 (TAE) coordinates L-serine. ATP contacts are provided by residues 262–264 (RRE) and valine 278. Glutamate 285 lines the L-serine pocket. 349–352 (EVSS) contributes to the ATP binding site. Residue serine 384 participates in L-serine binding.

The protein belongs to the class-II aminoacyl-tRNA synthetase family. Type-1 seryl-tRNA synthetase subfamily. In terms of assembly, homodimer. The tRNA molecule binds across the dimer.

Its subcellular location is the cytoplasm. The enzyme catalyses tRNA(Ser) + L-serine + ATP = L-seryl-tRNA(Ser) + AMP + diphosphate + H(+). It catalyses the reaction tRNA(Sec) + L-serine + ATP = L-seryl-tRNA(Sec) + AMP + diphosphate + H(+). Its pathway is aminoacyl-tRNA biosynthesis; selenocysteinyl-tRNA(Sec) biosynthesis; L-seryl-tRNA(Sec) from L-serine and tRNA(Sec): step 1/1. In terms of biological role, catalyzes the attachment of serine to tRNA(Ser). Is also able to aminoacylate tRNA(Sec) with serine, to form the misacylated tRNA L-seryl-tRNA(Sec), which will be further converted into selenocysteinyl-tRNA(Sec). The sequence is that of Serine--tRNA ligase from Akkermansia muciniphila (strain ATCC BAA-835 / DSM 22959 / JCM 33894 / BCRC 81048 / CCUG 64013 / CIP 107961 / Muc).